A 333-amino-acid polypeptide reads, in one-letter code: uncharacterized protein (333 aa).

Residues 67–274 (HFYPTTQVVS…LEMARNLAIE (208 aa)) form the Radical SAM core domain. Positions 82, 86, and 89 each coordinate [4Fe-4S] cluster.

It depends on [4Fe-4S] cluster as a cofactor.

This is an uncharacterized protein from Methanocaldococcus jannaschii (strain ATCC 43067 / DSM 2661 / JAL-1 / JCM 10045 / NBRC 100440) (Methanococcus jannaschii).